The primary structure comprises 230 residues: Inactive 2-(S)-hydroxypropyl-CoM dehydrogenase 2 (230 aa).

It belongs to the short-chain dehydrogenases/reductases (SDR) family.

This chain is Inactive 2-(S)-hydroxypropyl-CoM dehydrogenase 2, found in Xanthobacter autotrophicus (strain ATCC BAA-1158 / Py2).